A 184-amino-acid polypeptide reads, in one-letter code: ADP-ribosylation factor-like protein 2 (184 aa).

Residue Gly2 is the site of N-myristoyl glycine attachment. 23–30 (GLDNAGKT) is a binding site for GTP. The residue at position 45 (Ser45) is a Phosphoserine. GTP is bound by residues 66-70 (DVGGQ) and Gly68. Lys71 participates in a covalent cross-link: Glycyl lysine isopeptide (Lys-Gly) (interchain with G-Cter in ubiquitin). GTP is bound at residue 125–128 (NKQD).

Belongs to the small GTPase superfamily. Arf family. As to quaternary structure, found in a complex with ARL2, ARL2BP and SLC25A6. Found in a complex with at least ARL2, PPP2CB, PPP2R1A, PPP2R2A, PPP2R5E and TBCD. Found in a complex with ARL2, ARL2BP and SLC25A4. The GTP-bound form interacts with PDE6D. Interacts with ELMOD2. The GTP-bound form interacts with ARL2BP. Interacts, preferentially in its GDP-bound state, with TBCD. Interacts with UNC119. In terms of processing, not N-myristoylated.

It localises to the mitochondrion intermembrane space. The protein localises to the cytoplasm. The protein resides in the cytoskeleton. It is found in the microtubule organizing center. Its subcellular location is the centrosome. It localises to the nucleus. Small GTP-binding protein which cycles between an inactive GDP-bound and an active GTP-bound form, and the rate of cycling is regulated by guanine nucleotide exchange factors (GEF) and GTPase-activating proteins (GAP). GTP-binding protein that does not act as an allosteric activator of the cholera toxin catalytic subunit. Regulates formation of new microtubules and centrosome integrity. Prevents the TBCD-induced microtubule destruction. Participates in association with TBCD, in the disassembly of the apical junction complexes. Antagonizes the effect of TBCD on epithelial cell detachment and tight and adherens junctions disassembly. Together with ARL2, plays a role in the nuclear translocation, retention and transcriptional activity of STAT3. Component of a regulated secretory pathway involved in Ca(2+)-dependent release of acetylcholine. Required for normal progress through the cell cycle. Also regulates mitochondrial integrity and function. In Homo sapiens (Human), this protein is ADP-ribosylation factor-like protein 2 (ARL2).